We begin with the raw amino-acid sequence, 366 residues long: Inhibin alpha chain (366 aa).

Positions methionine 1–serine 18 are cleaved as a signal peptide. The propeptide occupies cysteine 19 to arginine 61. A propeptide spans histidine 62–arginine 232 (inhibin alpha N-terminal region). 2 N-linked (GlcNAc...) asparagine glycosylation sites follow: asparagine 146 and asparagine 268. Cystine bridges form between cysteine 262-cysteine 328, cysteine 291-cysteine 363, and cysteine 295-cysteine 365. N-linked (GlcNAc...) asparagine; partial glycosylation is present at asparagine 302.

Belongs to the TGF-beta family. In terms of assembly, dimeric, linked by one or more disulfide bonds. Activin B is a dimer of alpha and beta-B. Inhibin A is a dimer of alpha and beta-A. Inhibin B is a dimer of alpha and beta-B. Interacts with TGFBR3L; this interaction regulates female fertility. In terms of processing, proteolytic processing yields a number of bioactive forms. The 20/23 kDa forms consist solely of the mature alpha chain, the 26/29 kDa forms consist of the most N-terminal propeptide linked through a disulfide bond to the mature alpha chain, the 50/53 kDa forms encompass the entire proprotein. Each type can be furthermore either mono- or diglycosylated, causing the mass difference. In terms of tissue distribution, originally found in ovary (granulosa cells) and testis (Sertoli cells), but widely distributed in many tissues including brain and placenta. In adrenal cortex expression is limited to the zona reticularis and the innermost zona fasciculata in the normal gland, extending centripetally into the zona fasciculata in hyperplasia. Also found in adrenocortical tumors. Also expressed in prostate epithelium of benign prostatic hyperplasia, in regions of basal cell hyperplasia and in nonmalignant regions of high grade prostate cancer. Only circulating inhibin B is found in male, whereas circulating inhibins A and B are found in female.

Its subcellular location is the secreted. Functionally, inhibins and activins inhibit and activate, respectively, the secretion of follitropin by the pituitary gland. Inhibins/activins are involved in regulating a number of diverse functions such as hypothalamic and pituitary hormone secretion, gonadal hormone secretion, germ cell development and maturation, erythroid differentiation, insulin secretion, nerve cell survival, embryonic axial development or bone growth, depending on their subunit composition. Inhibins appear to oppose the functions of activins. In terms of biological role, inhibin A is a dimer of alpha/INHA and beta-A/INHBA that functions as a feedback regulator in the hypothalamic-pituitary-gonadal (HPG) axis. Inhibits the secretion of FSH from the anterior pituitary gland by acting on pituitary gonadotrope cells. Antagonizes activin A by binding to the proteoglycan, betaglycan, and forming a stable complex with and, thereby, sequestering type II activin receptors while excluding type I receptor. Its function is as follows. Inhibin B is a dimer of alpha and beta-B that plays a crucial role in the regulation of the reproductive system by inhibiting the secretion of follicle-stimulating hormone (FSH) from the anterior pituitary gland. Thereby, maintains reproductive homeostasis in both males and females. Acts as a more potent suppressor of FSH release than inhibin A. Functions as competitive receptor antagonist binding activin type II receptors with high affinity in the presence of the TGF-beta type III coreceptor/TGFBR3L. In Homo sapiens (Human), this protein is Inhibin alpha chain (INHA).